Consider the following 388-residue polypeptide: Succinate--CoA ligase [ADP-forming] subunit beta (388 aa).

One can recognise an ATP-grasp domain in the interval 9 to 244 (KQLFAEFGLP…ASQEDAREAH (236 aa)). Residues Lys46, 53 to 55 (GRG), Glu99, Ser102, and Glu107 contribute to the ATP site. Positions 199 and 213 each coordinate Mg(2+). Substrate is bound by residues Asn264 and 321–323 (GIV).

This sequence belongs to the succinate/malate CoA ligase beta subunit family. As to quaternary structure, heterotetramer of two alpha and two beta subunits. It depends on Mg(2+) as a cofactor.

It catalyses the reaction succinate + ATP + CoA = succinyl-CoA + ADP + phosphate. The catalysed reaction is GTP + succinate + CoA = succinyl-CoA + GDP + phosphate. It functions in the pathway carbohydrate metabolism; tricarboxylic acid cycle; succinate from succinyl-CoA (ligase route): step 1/1. Succinyl-CoA synthetase functions in the citric acid cycle (TCA), coupling the hydrolysis of succinyl-CoA to the synthesis of either ATP or GTP and thus represents the only step of substrate-level phosphorylation in the TCA. The beta subunit provides nucleotide specificity of the enzyme and binds the substrate succinate, while the binding sites for coenzyme A and phosphate are found in the alpha subunit. This chain is Succinate--CoA ligase [ADP-forming] subunit beta, found in Vibrio cholerae serotype O1 (strain ATCC 39541 / Classical Ogawa 395 / O395).